Reading from the N-terminus, the 91-residue chain is Sec-independent protein translocase protein TatAt (91 aa).

Residues 9-29 traverse the membrane as a helical segment; that stretch reads FPGLPGGPELLVVLLIVVLLF. A disordered region spans residues 48–91; it reads FQRGREEIEDELQDMTGDDDEDDATSESSADSVSTDSVSTESSN. The segment covering 54-72 has biased composition (acidic residues); the sequence is EIEDELQDMTGDDDEDDAT. Over residues 73-91 the composition is skewed to low complexity; it reads SESSADSVSTDSVSTESSN.

It belongs to the TatA/E family. Forms a complex with TatC. Cytoplasmic and membrane-bound TatA form high-molecular-weight complexes.

Its subcellular location is the cell membrane. The protein localises to the cytoplasm. Its function is as follows. Part of the twin-arginine translocation (Tat) system that transports large folded proteins containing a characteristic twin-arginine motif in their signal peptide across membranes. TatA could form the protein-conducting channel of the Tat system. This chain is Sec-independent protein translocase protein TatAt, found in Haloferax volcanii (strain ATCC 29605 / DSM 3757 / JCM 8879 / NBRC 14742 / NCIMB 2012 / VKM B-1768 / DS2) (Halobacterium volcanii).